The sequence spans 453 residues: Bifunctional protein GlmU (453 aa).

The tract at residues 1 to 226 is pyrophosphorylase; the sequence is MTLDVVILAA…ALEVEGVNNR (226 aa). Residues 8–11, Lys22, Gln73, 78–79, 99–101, Gly136, Glu151, Asn166, and Asn224 contribute to the UDP-N-acetyl-alpha-D-glucosamine site; these read LAAG, GT, and YGD. Asp101 serves as a coordination point for Mg(2+). Residue Asn224 coordinates Mg(2+). The tract at residues 227 to 247 is linker; sequence SQMAALERAYQRDRAERLLTE. An N-acetyltransferase region spans residues 248–453; it reads GVALADPARF…AGWKRPRKSS (206 aa). Residues Arg330 and Lys348 each contribute to the UDP-N-acetyl-alpha-D-glucosamine site. Residue His360 is the Proton acceptor of the active site. UDP-N-acetyl-alpha-D-glucosamine is bound by residues Tyr363 and Asn374. Acetyl-CoA contacts are provided by residues Ala377, 383–384, Ser402, Ala420, and Arg437; that span reads NY.

The protein in the N-terminal section; belongs to the N-acetylglucosamine-1-phosphate uridyltransferase family. It in the C-terminal section; belongs to the transferase hexapeptide repeat family. Homotrimer. Mg(2+) is required as a cofactor.

Its subcellular location is the cytoplasm. The enzyme catalyses alpha-D-glucosamine 1-phosphate + acetyl-CoA = N-acetyl-alpha-D-glucosamine 1-phosphate + CoA + H(+). It catalyses the reaction N-acetyl-alpha-D-glucosamine 1-phosphate + UTP + H(+) = UDP-N-acetyl-alpha-D-glucosamine + diphosphate. Its pathway is nucleotide-sugar biosynthesis; UDP-N-acetyl-alpha-D-glucosamine biosynthesis; N-acetyl-alpha-D-glucosamine 1-phosphate from alpha-D-glucosamine 6-phosphate (route II): step 2/2. The protein operates within nucleotide-sugar biosynthesis; UDP-N-acetyl-alpha-D-glucosamine biosynthesis; UDP-N-acetyl-alpha-D-glucosamine from N-acetyl-alpha-D-glucosamine 1-phosphate: step 1/1. It participates in bacterial outer membrane biogenesis; LPS lipid A biosynthesis. Its function is as follows. Catalyzes the last two sequential reactions in the de novo biosynthetic pathway for UDP-N-acetylglucosamine (UDP-GlcNAc). The C-terminal domain catalyzes the transfer of acetyl group from acetyl coenzyme A to glucosamine-1-phosphate (GlcN-1-P) to produce N-acetylglucosamine-1-phosphate (GlcNAc-1-P), which is converted into UDP-GlcNAc by the transfer of uridine 5-monophosphate (from uridine 5-triphosphate), a reaction catalyzed by the N-terminal domain. The protein is Bifunctional protein GlmU of Chromohalobacter salexigens (strain ATCC BAA-138 / DSM 3043 / CIP 106854 / NCIMB 13768 / 1H11).